Here is a 366-residue protein sequence, read N- to C-terminus: Spermine synthase (366 aa).

Ala-2 is subject to N-acetylalanine. Phosphoserine is present on Ser-57. A PABS domain is found at 122 to 362 (RYWPTADGRL…ELWVFYTVWK (241 aa)). Residue Gln-148 participates in S-adenosyl 3-(methylsulfanyl)propylamine binding. The spermidine site is built by Tyr-177 and Asp-201. Residues Glu-220 and 255 to 256 (DC) contribute to the S-adenosyl 3-(methylsulfanyl)propylamine site. Asp-276 acts as the Proton acceptor in catalysis. Residues Tyr-351 and Glu-353 each coordinate spermidine.

It belongs to the spermidine/spermine synthase family. Homodimer. Dimerization is mediated through the N-terminal domain and seems to be required for activity as deletion of the N-terminal domain causes complete loss of activity.

It carries out the reaction S-adenosyl 3-(methylsulfanyl)propylamine + spermidine = spermine + S-methyl-5'-thioadenosine + H(+). Its pathway is amine and polyamine biosynthesis; spermine biosynthesis; spermine from spermidine: step 1/1. Catalyzes the production of spermine from spermidine and decarboxylated S-adenosylmethionine (dcSAM). The sequence is that of Spermine synthase from Homo sapiens (Human).